A 916-amino-acid polypeptide reads, in one-letter code: Translation initiation factor IF-2 (916 aa).

The disordered stretch occupies residues 55–324 (EPKAVTPTSK…NHNANLKPVT (270 aa)). Residues 77–88 (AAEPKAAATKPA) are compositionally biased toward low complexity. 3 stretches are compositionally biased toward basic and acidic residues: residues 98-121 (FKAE…ERRN), 129-161 (RQKD…DNRN), and 198-212 (RQSE…EAKR). Residues 227 to 250 (KEQPTVEAAATAAPQAQPQTVEQV) show a composition bias toward low complexity. The span at 264–281 (ARPDKSRDFSHENEDGPK) shows a compositional bias: basic and acidic residues. Residues 291-304 (KQNQVRNQKNSNWN) are compositionally biased toward low complexity. The span at 305–314 (KKNKKSKNNR) shows a compositional bias: basic residues. Residues 418 to 585 (ERAPVVTIMG…TVLLVAEIQE (168 aa)) enclose the tr-type G domain. Residues 427–434 (GHVDHGKT) form a G1 region. GTP is bound at residue 427–434 (GHVDHGKT). The tract at residues 452 to 456 (GITQH) is G2. Residues 473 to 476 (DTPG) are G3. Residues 473-477 (DTPGH) and 527-530 (NKID) each bind GTP. The segment at 527 to 530 (NKID) is G4. Residues 563–565 (SAK) form a G5 region.

This sequence belongs to the TRAFAC class translation factor GTPase superfamily. Classic translation factor GTPase family. IF-2 subfamily.

The protein resides in the cytoplasm. In terms of biological role, one of the essential components for the initiation of protein synthesis. Protects formylmethionyl-tRNA from spontaneous hydrolysis and promotes its binding to the 30S ribosomal subunits. Also involved in the hydrolysis of GTP during the formation of the 70S ribosomal complex. The protein is Translation initiation factor IF-2 of Streptococcus mutans serotype c (strain ATCC 700610 / UA159).